Reading from the N-terminus, the 265-residue chain is Undecaprenyl-diphosphatase (265 aa).

8 helical membrane-spanning segments follow: residues 15-37 (GLTE…LLEY), 41-61 (KAES…VFLY), 85-105 (YLLA…HSFI), 109-129 (LFGP…ILAV), 144-164 (VSPA…WPGF), 183-203 (LAAE…TGYD), 218-238 (FWAV…KGFI), and 244-264 (VTFR…LLFW).

This sequence belongs to the UppP family.

It is found in the cell inner membrane. It catalyses the reaction di-trans,octa-cis-undecaprenyl diphosphate + H2O = di-trans,octa-cis-undecaprenyl phosphate + phosphate + H(+). Functionally, catalyzes the dephosphorylation of undecaprenyl diphosphate (UPP). Confers resistance to bacitracin. This is Undecaprenyl-diphosphatase from Oleidesulfovibrio alaskensis (strain ATCC BAA-1058 / DSM 17464 / G20) (Desulfovibrio alaskensis).